The chain runs to 329 residues: DNA-directed RNA polymerase subunit alpha (329 aa).

Residues 1–235 are alpha N-terminal domain (alpha-NTD); that stretch reads MQGSVTEFLK…EQLDAFVDLR (235 aa). The alpha C-terminal domain (alpha-CTD) stretch occupies residues 249-329; it reads FDPILLRPVD…NWPPASIAED (81 aa).

This sequence belongs to the RNA polymerase alpha chain family. Homodimer. The RNAP catalytic core consists of 2 alpha, 1 beta, 1 beta' and 1 omega subunit. When a sigma factor is associated with the core the holoenzyme is formed, which can initiate transcription.

It carries out the reaction RNA(n) + a ribonucleoside 5'-triphosphate = RNA(n+1) + diphosphate. Functionally, DNA-dependent RNA polymerase catalyzes the transcription of DNA into RNA using the four ribonucleoside triphosphates as substrates. The protein is DNA-directed RNA polymerase subunit alpha of Photobacterium profundum (strain SS9).